We begin with the raw amino-acid sequence, 309 residues long: Elongator complex protein 5 (309 aa).

Phosphoserine occurs at positions 3 and 4.

Belongs to the ELP5 family. Component of the elongator complex, which consists of ELP1/IKI3, ELP2, ELP3, ELP4, ELP5/IKI1 and ELP6. The elongator complex is composed of two copies of the Elp123 subcomplex (composed of ELP1/IKI3, ELP2 and ELP3) and two copies of the Elp456 subcomplex (composed of ELP4, ELP5/IKI1 and ELP6). The Elp123 subcomplex forms a two-lobed scaffold, which binds the Elp456 subcomplex asymmetrically. In each lobe, ELP2 is tightly sandwiched between ELP1/IKI3 and ELP3. The Elp123 subcomplex binds tRNA through ELP1/IKI3 and ELP3 and can bind 2 tRNAs simultaneously. tRNA-binding by the Elp123 subcomplex induces conformational rearrangements which precisely position the targeted anticodon base in the active site. The Elp456 subcomplex binds tRNA and has ATPase activity. Interacts with KTI11/DPH3.

It localises to the cytoplasm. Its subcellular location is the nucleus. Its pathway is tRNA modification; 5-methoxycarbonylmethyl-2-thiouridine-tRNA biosynthesis. Component of the elongator complex which is required for multiple tRNA modifications, including mcm5U (5-methoxycarbonylmethyl uridine), mcm5s2U (5-methoxycarbonylmethyl-2-thiouridine), and ncm5U (5-carbamoylmethyl uridine). The elongator complex catalyzes formation of carboxymethyluridine in the wobble base at position 34 in tRNAs. It functions as a gamma-toxin target (TOT); disruption of the complex confers resistance to Kluyveromyces lactis toxin zymocin (pGKL1 killer toxin). May also be involved in sensitivity to Pichia inositovora toxin. This chain is Elongator complex protein 5 (IKI1), found in Saccharomyces cerevisiae (strain ATCC 204508 / S288c) (Baker's yeast).